Here is a 495-residue protein sequence, read N- to C-terminus: MIPVIALVGRPNVGKSTLFNRLTHTRDALVADFPGLTRDRKYGRAEVEGHEFIVVDTGGIDGTEDGVETKMAGQSLLAIEEADIVLFMVDARAGLMPADQGIAQHLRSREKATFLVANKTDGIDPDTATADFYSLGLGEVHAIAASHGRGVTQLIEDVMAPYMDAEEPEVELTEEEENAAYWAEQEAQGEDVPPEDPEDDFDPRTLPIKLAIVGRPNVGKSTLTNRILGEDRVVVYDMPGTTRDSIYIPMTRDDREYILIDTAGVRKRGKITETVEKFSVIKTLQAIEDSNVVLLVIDARDGISDQDLSLLGFILNSGRSLVIAVNKWDGMTEEARAQVKDMLDLRLGFVDFARIHFISALHGSGVGNLFESVQEAYDCSTKRVGTSLLTRIMQMAEEDHQPPLVRGRRVKLKYAHAGGYNPPIVVIHGNQVTDLSDSYKRYLMNYFRRSLKVMGTPIRIQFKEGENPFAGKRNPLTPNQMRKRKRLMSHLKKGK.

EngA-type G domains lie at proline 3–glutamate 166 and isoleucine 208–threonine 381. GTP-binding positions include glycine 9–serine 16, aspartate 56–isoleucine 60, asparagine 118–aspartate 121, glycine 214–serine 221, aspartate 261–valine 265, and asparagine 326–aspartate 329. The region spanning lysine 382–glutamate 466 is the KH-like domain.

Belongs to the TRAFAC class TrmE-Era-EngA-EngB-Septin-like GTPase superfamily. EngA (Der) GTPase family. In terms of assembly, associates with the 50S ribosomal subunit.

GTPase that plays an essential role in the late steps of ribosome biogenesis. The polypeptide is GTPase Der (Yersinia pseudotuberculosis serotype O:3 (strain YPIII)).